Reading from the N-terminus, the 484-residue chain is Chromosomal replication initiator protein DnaA (484 aa).

A domain I, interacts with DnaA modulators region spans residues Met-1–Thr-73. The interval Thr-73–Pro-140 is domain II. The segment at Phe-141–Ile-357 is domain III, AAA+ region. ATP contacts are provided by Gly-185, Gly-187, Lys-188, and Thr-189. Residues Asp-358–Asn-484 form a domain IV, binds dsDNA region.

Belongs to the DnaA family. Oligomerizes as a right-handed, spiral filament on DNA at oriC.

Its subcellular location is the cytoplasm. Plays an essential role in the initiation and regulation of chromosomal replication. ATP-DnaA binds to the origin of replication (oriC) to initiate formation of the DNA replication initiation complex once per cell cycle. Binds the DnaA box (a 9 base pair repeat at the origin) and separates the double-stranded (ds)DNA. Forms a right-handed helical filament on oriC DNA; dsDNA binds to the exterior of the filament while single-stranded (ss)DNA is stabiized in the filament's interior. The ATP-DnaA-oriC complex binds and stabilizes one strand of the AT-rich DNA unwinding element (DUE), permitting loading of DNA polymerase. After initiation quickly degrades to an ADP-DnaA complex that is not apt for DNA replication. Binds acidic phospholipids. In Borrelia recurrentis (strain A1), this protein is Chromosomal replication initiator protein DnaA.